Reading from the N-terminus, the 902-residue chain is DNA mismatch repair protein MutS (902 aa).

647–654 (GPNMGGKS) contributes to the ATP binding site.

It belongs to the DNA mismatch repair MutS family.

Its function is as follows. This protein is involved in the repair of mismatches in DNA. It is possible that it carries out the mismatch recognition step. This protein has a weak ATPase activity. This chain is DNA mismatch repair protein MutS, found in Nitrosospira multiformis (strain ATCC 25196 / NCIMB 11849 / C 71).